A 638-amino-acid chain; its full sequence is MSQTGMTIDNVLDSIQHPTDVAKLDADQLRQLADELRERIIGTVSQNGGHLAPSLGVVELTLALLSVFNPDKDKFVWDVGHQAYAWKLLTGRRDEFSTLRQYQGISGFPKMAESPYDHFGVGHSSTSISAAAGMAMARDLAGDDNDVIAIIGDGSMTAGLAFEGLNQAGHQGRRLLVILNDNEMSISKNVGALSLFLSRNLSSRWVRRMKRDVETWLKSVPGIGEEMLNYAKRSEHSLKSFFTPGMLFEAFRFNYVGPVDGHDVRNLAKVMQMARALDEPVLLHVLTKKGKGYEPAESNPTYFHGVGRFELETGAACKFVDSDSLPSYTEVFGSTLCSLAEKDERVIAITAAMPEGTGVGEFSRRFPDRFVDVGICEQHAVTFAAGLAAQGFRPVVAIYSTFLQRSYDQIVHDVCLQKLPVTFCLDRGGLVGEDGPTHHGAFDLSYLRHIPNLTIIAPKDEAELQQAMKTALAGEGPVAIRYPRGIGVGACLSADPGVLEHGRGELLKKGADVAVIAVGSRVHPALAVAEEIERSTGKAVSVFNARFVKPLDAEQLVALARSHDSLLLLEENTTTGGFSSGVLELLADHDCLAGVHVRRLGLPDDFVTHGTQKQLRKLTGIDRAAIRRTLLEMLGLQE.

Thiamine diphosphate is bound by residues histidine 81 and 122 to 124 (GHS). Residue aspartate 153 participates in Mg(2+) binding. Thiamine diphosphate is bound by residues 154 to 155 (GS), asparagine 182, tyrosine 293, and glutamate 377. Asparagine 182 contacts Mg(2+).

It belongs to the transketolase family. DXPS subfamily. In terms of assembly, homodimer. Requires Mg(2+) as cofactor. Thiamine diphosphate is required as a cofactor.

It carries out the reaction D-glyceraldehyde 3-phosphate + pyruvate + H(+) = 1-deoxy-D-xylulose 5-phosphate + CO2. Its pathway is metabolic intermediate biosynthesis; 1-deoxy-D-xylulose 5-phosphate biosynthesis; 1-deoxy-D-xylulose 5-phosphate from D-glyceraldehyde 3-phosphate and pyruvate: step 1/1. Its function is as follows. Catalyzes the acyloin condensation reaction between C atoms 2 and 3 of pyruvate and glyceraldehyde 3-phosphate to yield 1-deoxy-D-xylulose-5-phosphate (DXP). This chain is 1-deoxy-D-xylulose-5-phosphate synthase, found in Oleidesulfovibrio alaskensis (strain ATCC BAA-1058 / DSM 17464 / G20) (Desulfovibrio alaskensis).